The following is a 415-amino-acid chain: Amylovoran biosynthesis protein AmsJ (415 aa).

It belongs to the polysaccharide pyruvyl transferase family.

The protein operates within glycan metabolism; exopolysaccharide biosynthesis. Involved in the biosynthesis of amylovoran which functions as a virulence factor. The polypeptide is Amylovoran biosynthesis protein AmsJ (amsJ) (Erwinia amylovora (Fire blight bacteria)).